Here is a 440-residue protein sequence, read N- to C-terminus: L-seryl-tRNA(Sec) selenium transferase (440 aa).

N6-(pyridoxal phosphate)lysine is present on lysine 282.

The protein belongs to the SelA family. Pyridoxal 5'-phosphate serves as cofactor.

Its subcellular location is the cytoplasm. It catalyses the reaction L-seryl-tRNA(Sec) + selenophosphate + H(+) = L-selenocysteinyl-tRNA(Sec) + phosphate. The protein operates within aminoacyl-tRNA biosynthesis; selenocysteinyl-tRNA(Sec) biosynthesis; selenocysteinyl-tRNA(Sec) from L-seryl-tRNA(Sec) (bacterial route): step 1/1. Its function is as follows. Converts seryl-tRNA(Sec) to selenocysteinyl-tRNA(Sec) required for selenoprotein biosynthesis. In Campylobacter jejuni subsp. jejuni serotype O:6 (strain 81116 / NCTC 11828), this protein is L-seryl-tRNA(Sec) selenium transferase.